A 283-amino-acid chain; its full sequence is ATP phosphoribosyltransferase (283 aa).

This sequence belongs to the ATP phosphoribosyltransferase family. Long subfamily. It depends on Mg(2+) as a cofactor.

Its subcellular location is the cytoplasm. The enzyme catalyses 1-(5-phospho-beta-D-ribosyl)-ATP + diphosphate = 5-phospho-alpha-D-ribose 1-diphosphate + ATP. It functions in the pathway amino-acid biosynthesis; L-histidine biosynthesis; L-histidine from 5-phospho-alpha-D-ribose 1-diphosphate: step 1/9. With respect to regulation, feedback inhibited by histidine. Functionally, catalyzes the condensation of ATP and 5-phosphoribose 1-diphosphate to form N'-(5'-phosphoribosyl)-ATP (PR-ATP). Has a crucial role in the pathway because the rate of histidine biosynthesis seems to be controlled primarily by regulation of HisG enzymatic activity. This chain is ATP phosphoribosyltransferase, found in Rhodococcus erythropolis (strain PR4 / NBRC 100887).